The chain runs to 700 residues: Long chain acyl-CoA synthetase 7, peroxisomal (700 aa).

A disordered region spans residues Met-1–Ser-29. Residues Glu-7–Ile-18 show a composition bias toward basic and acidic residues. Residues Arg-10–Ile-18 carry the Microbody targeting signal motif. Residues Asp-19–Ser-29 show a composition bias toward polar residues. Position 266 to 277 (Ile-266 to Lys-277) interacts with ATP. The fatty acid-binding stretch occupies residues Asp-526–Lys-550. Positions Ser-698–Leu-700 match the Microbody targeting signal motif.

Belongs to the ATP-dependent AMP-binding enzyme family. Interacts with PEX5. Mg(2+) serves as cofactor. In terms of tissue distribution, expressed in roots, stems, leaves flowers and germinating seedling. Preferentially expressed in seeds.

It is found in the peroxisome. It catalyses the reaction a long-chain fatty acid + ATP + CoA = a long-chain fatty acyl-CoA + AMP + diphosphate. It carries out the reaction decanoate + ATP + CoA = decanoyl-CoA + AMP + diphosphate. The enzyme catalyses dodecanoate + ATP + CoA = dodecanoyl-CoA + AMP + diphosphate. The catalysed reaction is tetradecanoate + ATP + CoA = tetradecanoyl-CoA + AMP + diphosphate. It catalyses the reaction hexadecanoate + ATP + CoA = hexadecanoyl-CoA + AMP + diphosphate. It carries out the reaction (9Z)-octadecenoate + ATP + CoA = (9Z)-octadecenoyl-CoA + AMP + diphosphate. The enzyme catalyses (9Z,12Z)-octadecadienoate + ATP + CoA = (9Z,12Z)-octadecadienoyl-CoA + AMP + diphosphate. The catalysed reaction is (9Z,12Z,15Z)-octadecatrienoate + ATP + CoA = (9Z,12Z,15Z)-octadecatrienoyl-CoA + AMP + diphosphate. It functions in the pathway lipid metabolism; fatty acid metabolism. In terms of biological role, activation of long-chain fatty acids for both synthesis of cellular lipids, and degradation via beta-oxidation. Preferentially uses palmitate, palmitoleate, oleate, linoleate and eicosenoate as substrates. Can use myristate and linolenate as substrates. Functions redundantly with LACS6 in lipid mobilization for beta-oxidation during seed germination, which is essential for postgerminative growth and seedling establishment. The protein is Long chain acyl-CoA synthetase 7, peroxisomal of Arabidopsis thaliana (Mouse-ear cress).